Reading from the N-terminus, the 523-residue chain is Bifunctional purine biosynthesis protein PurH (523 aa).

In terms of domain architecture, MGS-like spans 1 to 149 (MSDPVIKRAL…KNNESVTVIT (149 aa)).

The protein belongs to the PurH family.

It catalyses the reaction (6R)-10-formyltetrahydrofolate + 5-amino-1-(5-phospho-beta-D-ribosyl)imidazole-4-carboxamide = 5-formamido-1-(5-phospho-D-ribosyl)imidazole-4-carboxamide + (6S)-5,6,7,8-tetrahydrofolate. It carries out the reaction IMP + H2O = 5-formamido-1-(5-phospho-D-ribosyl)imidazole-4-carboxamide. Its pathway is purine metabolism; IMP biosynthesis via de novo pathway; 5-formamido-1-(5-phospho-D-ribosyl)imidazole-4-carboxamide from 5-amino-1-(5-phospho-D-ribosyl)imidazole-4-carboxamide (10-formyl THF route): step 1/1. It functions in the pathway purine metabolism; IMP biosynthesis via de novo pathway; IMP from 5-formamido-1-(5-phospho-D-ribosyl)imidazole-4-carboxamide: step 1/1. This is Bifunctional purine biosynthesis protein PurH from Chlorobaculum parvum (strain DSM 263 / NCIMB 8327) (Chlorobium vibrioforme subsp. thiosulfatophilum).